The sequence spans 689 residues: Glycine--tRNA ligase beta subunit (689 aa).

Belongs to the class-II aminoacyl-tRNA synthetase family. As to quaternary structure, tetramer of two alpha and two beta subunits.

Its subcellular location is the cytoplasm. The enzyme catalyses tRNA(Gly) + glycine + ATP = glycyl-tRNA(Gly) + AMP + diphosphate. The sequence is that of Glycine--tRNA ligase beta subunit from Shewanella baltica (strain OS223).